Here is a 59-residue protein sequence, read N- to C-terminus: MSKTIKVTQTKSSIGRLPKHVLCLKGLGLRRINHTVELEDTACVRGMINKVHYMVKIEE.

It belongs to the universal ribosomal protein uL30 family. Part of the 50S ribosomal subunit.

The chain is Large ribosomal subunit protein uL30 from Aliivibrio salmonicida (strain LFI1238) (Vibrio salmonicida (strain LFI1238)).